The sequence spans 1533 residues: Glycogen debranching enzyme (1533 aa).

The residue at position 64 (Ser64) is a Phosphoserine. Residues Asp527, His530, and Asp628 contribute to the active site.

This sequence belongs to the glycogen debranching enzyme family. In terms of assembly, monomer. Interacts with NHLRC1/malin. Ubiquitinated. As to expression, ubiquitous. Expressed in striated skeletal muscle, heart, liver, spleen, skin, spinal cord, lung, kidney and testicle.

It localises to the cytoplasm. It carries out the reaction Transfers a segment of a (1-&gt;4)-alpha-D-glucan to a new position in an acceptor, which may be glucose or a (1-&gt;4)-alpha-D-glucan.. The enzyme catalyses Hydrolysis of (1-&gt;6)-alpha-D-glucosidic branch linkages in glycogen phosphorylase limit dextrin.. Its function is as follows. Multifunctional enzyme acting as 1,4-alpha-D-glucan:1,4-alpha-D-glucan 4-alpha-D-glycosyltransferase and amylo-1,6-glucosidase in glycogen degradation. The sequence is that of Glycogen debranching enzyme from Equus caballus (Horse).